Consider the following 429-residue polypeptide: CinA-like protein (429 aa).

It belongs to the CinA family.

The protein is CinA-like protein of Chlorobium limicola (strain DSM 245 / NBRC 103803 / 6330).